Here is a 285-residue protein sequence, read N- to C-terminus: 2-dehydro-3-deoxyphosphooctonate aldolase (285 aa).

This sequence belongs to the KdsA family.

It localises to the cytoplasm. The enzyme catalyses D-arabinose 5-phosphate + phosphoenolpyruvate + H2O = 3-deoxy-alpha-D-manno-2-octulosonate-8-phosphate + phosphate. It functions in the pathway carbohydrate biosynthesis; 3-deoxy-D-manno-octulosonate biosynthesis; 3-deoxy-D-manno-octulosonate from D-ribulose 5-phosphate: step 2/3. The protein operates within bacterial outer membrane biogenesis; lipopolysaccharide biosynthesis. This is 2-dehydro-3-deoxyphosphooctonate aldolase from Bordetella bronchiseptica (strain ATCC BAA-588 / NCTC 13252 / RB50) (Alcaligenes bronchisepticus).